A 354-amino-acid chain; its full sequence is Guanine nucleotide-binding protein G(t) subunit alpha-2 (354 aa).

The tract at residues Met1–Asp28 is disordered. Gly2 carries the N-myristoyl glycine lipid modification. A compositionally biased stretch (basic and acidic residues) spans Ala7–Asp28. Residues Lys32–Phe354 form the G-alpha domain. The G1 motif stretch occupies residues Lys35–Thr48. Residues Gly40–Ser47, Leu175–Thr181, Asp200–Gln204, Asn269–Asp272, and Ala326 each bind GTP. 2 residues coordinate Mg(2+): Ser47 and Thr181. The G2 motif stretch occupies residues Asp173–Thr181. Positions Phe196–Arg205 are G3 motif. The segment at Val265–Asp272 is G4 motif. The G5 motif stretch occupies residues Thr324 to Thr329.

It belongs to the G-alpha family. G(i/o/t/z) subfamily. In terms of assembly, g proteins are composed of 3 units; alpha, beta and gamma. The alpha chain contains the guanine nucleotide binding site. In the retina, expressed in the rod photoreceptors.

The protein resides in the cell projection. The protein localises to the cilium. It is found in the photoreceptor outer segment. It localises to the photoreceptor inner segment. Functionally, guanine nucleotide-binding proteins (G proteins) are involved as modulators or transducers in various transmembrane signaling systems. Transducin is an amplifier and one of the transducers of a visual impulse that performs the coupling between rhodopsin and cGMP-phosphodiesterase. The sequence is that of Guanine nucleotide-binding protein G(t) subunit alpha-2 (Gnat2) from Mus musculus (Mouse).